Reading from the N-terminus, the 492-residue chain is Bifunctional purine biosynthesis protein PurH (492 aa).

The region spanning 1 to 144 (MKKAILSVSN…KNYKHVTTIV (144 aa)) is the MGS-like domain.

The protein belongs to the PurH family.

The enzyme catalyses (6R)-10-formyltetrahydrofolate + 5-amino-1-(5-phospho-beta-D-ribosyl)imidazole-4-carboxamide = 5-formamido-1-(5-phospho-D-ribosyl)imidazole-4-carboxamide + (6S)-5,6,7,8-tetrahydrofolate. It catalyses the reaction IMP + H2O = 5-formamido-1-(5-phospho-D-ribosyl)imidazole-4-carboxamide. It participates in purine metabolism; IMP biosynthesis via de novo pathway; 5-formamido-1-(5-phospho-D-ribosyl)imidazole-4-carboxamide from 5-amino-1-(5-phospho-D-ribosyl)imidazole-4-carboxamide (10-formyl THF route): step 1/1. The protein operates within purine metabolism; IMP biosynthesis via de novo pathway; IMP from 5-formamido-1-(5-phospho-D-ribosyl)imidazole-4-carboxamide: step 1/1. This Staphylococcus aureus (strain MRSA252) protein is Bifunctional purine biosynthesis protein PurH.